Consider the following 165-residue polypeptide: Nucleotide-binding protein Cagg_1607 (165 aa).

Belongs to the YajQ family.

Its function is as follows. Nucleotide-binding protein. The protein is Nucleotide-binding protein Cagg_1607 of Chloroflexus aggregans (strain MD-66 / DSM 9485).